Here is a 98-residue protein sequence, read N- to C-terminus: Integration host factor subunit alpha (98 aa).

The disordered stretch occupies residues F49 to I71.

It belongs to the bacterial histone-like protein family. As to quaternary structure, heterodimer of an alpha and a beta chain.

In terms of biological role, this protein is one of the two subunits of integration host factor, a specific DNA-binding protein that functions in genetic recombination as well as in transcriptional and translational control. This chain is Integration host factor subunit alpha, found in Pectobacterium atrosepticum (strain SCRI 1043 / ATCC BAA-672) (Erwinia carotovora subsp. atroseptica).